Reading from the N-terminus, the 6684-residue chain is Replicase polyprotein 1ab (6684 aa).

The CoV Nsp1 globular domain maps to serine 2–glycine 108. One can recognise a CoV Nsp2 N-terminal domain in the interval alanine 111–arginine 349. 4 residues coordinate Zn(2+): cysteine 240, cysteine 242, cysteine 259, and cysteine 260. Positions cysteine 240–cysteine 260 are C4. The CoV Nsp2 middle domain occupies asparagine 378–isoleucine 773. Positions arginine 768–glycine 879 constitute a CoV Nsp2 C-terminal domain. Residues lysine 882–isoleucine 983 enclose the Ubiquitin-like 1 domain. The tract at residues glutamate 989–valine 1032 is disordered. Positions serine 997–glutamate 1015 are enriched in acidic residues. In terms of domain architecture, Peptidase C16 1 spans proline 1055–proline 1299. Catalysis depends on cysteine 1093, which acts as the For PL1-PRO activity. The C4-type 1; degenerate zinc-finger motif lies at cysteine 1164–cysteine 1195. Residues histidine 1244 and aspartate 1257 each act as for PL1-PRO activity in the active site. The region spanning asparagine 1318–isoleucine 1489 is the Macro domain. The Ubiquitin-like 2 domain occupies serine 1486–lysine 1542. The Peptidase C16 2 domain occupies alanine 1550–glutamine 1803. The For PL2-PRO activity role is filled by cysteine 1588. Residues cysteine 1667, cysteine 1670, cysteine 1694, and histidine 1696 each contribute to the Zn(2+) site. The segment at cysteine 1667–histidine 1696 adopts a C4-type 2; atypical zinc-finger fold. Active-site for PL2-PRO activity residues include histidine 1741 and aspartate 1754. The helical transmembrane segment at leucine 1896–valine 1916 threads the bilayer. The tract at residues leucine 1896 to cysteine 2053 is HD1. In terms of domain architecture, 3Ecto spans asparagine 1905 to aspartate 1970. 2 disulfides stabilise this stretch: cysteine 1921–cysteine 1948 and cysteine 1939–cysteine 1945. 2 helical membrane-spanning segments follow: residues cysteine 1995–valine 2015 and phenylalanine 2033–cysteine 2053. The Y1 stretch occupies residues leucine 2044–aspartate 2134. A CoV Nsp3 Y domain is found at leucine 2044–serine 2384. Positions 2048, 2053, 2058, 2061, 2094, 2097, 2101, and 2104 each coordinate Zn(2+). The tract at residues histidine 2048 to cysteine 2061 is ZF1. Residues cysteine 2094–cysteine 2104 are ZF2. The tract at residues arginine 2135–leucine 2224 is Y2. Residues arginine 2135–serine 2384 form a coV-Y region. The Y3 stretch occupies residues serine 2225–glycine 2281. Residues isoleucine 2282–serine 2384 form a Y4 region. A run of 8 helical transmembrane segments spans residues isoleucine 2401–alanine 2421, tyrosine 2467–leucine 2487, proline 2497–valine 2517, cysteine 2538–alanine 2558, glycine 2666–leucine 2686, cysteine 2695–valine 2715, phenylalanine 2721–isoleucine 2741, and phenylalanine 2746–phenylalanine 2766. Positions isoleucine 2401–phenylalanine 2766 are HD2. The Nsp4C domain occupies leucine 2783–glutamine 2878. The region spanning serine 2879–glutamine 3180 is the Peptidase C30 domain. Residues histidine 2919 and cysteine 3022 each act as for 3CL-PRO activity in the active site. 8 consecutive transmembrane segments (helical) span residues phenylalanine 3187–methionine 3207, threonine 3217–isoleucine 3237, leucine 3242–tryptophan 3262, methionine 3280–valine 3300, tryptophan 3313–threonine 3333, phenylalanine 3347–alanine 3367, isoleucine 3371–methionine 3391, and isoleucine 3394–tryptophan 3414. The segment at phenylalanine 3187 to tryptophan 3414 is HD3. One can recognise a RdRp Nsp7 cofactor domain in the interval serine 3475–glutamine 3557. The region spanning serine 3558–glutamine 3752 is the RdRp Nsp8 cofactor domain. The region spanning asparagine 3753 to glutamine 3863 is the Nsp9 ssRNA-binding domain. Residues alanine 3864–glutamine 4004 form the ExoN/MTase coactivator domain. Zn(2+)-binding residues include cysteine 3937, cysteine 3940, histidine 3946, cysteine 3953, cysteine 3979, cysteine 3982, cysteine 3990, and cysteine 3992. 2 zinc fingers span residues cysteine 3937 to cysteine 3953 and cysteine 3979 to cysteine 3992. Residues tyrosine 4006 to isoleucine 4255 enclose the NiRAN domain. Residues lysine 4261–methionine 4359 enclose the Nsp12 Interface domain. 5 residues coordinate Zn(2+): histidine 4290, cysteine 4296, cysteine 4301, cysteine 4305, and cysteine 4482. The region spanning lysine 4360–glutamine 4927 is the Nsp12 RNA-dependent RNA polymerase domain. Residues serine 4362–alanine 4576 form a rdRp Fingers N-ter region. A rdRp Palm N-ter region spans residues threonine 4577 to proline 4615. One can recognise a RdRp catalytic domain in the interval glycine 4607–glycine 4769. The interval lysine 4616 to glycine 4674 is rdRp Fingers C-ter. Zn(2+) contacts are provided by histidine 4637, cysteine 4640, and cysteine 4641. Residues threonine 4675–glutamine 4810 form a rdRp Palm C-ter region. Residues serine 4754, aspartate 4755, and aspartate 4756 contribute to the active site. The rdRp Thumb stretch occupies residues histidine 4811–glutamine 4927. A CV ZBD domain is found at alanine 4928–aspartate 5040. Cysteine 4932, cysteine 4935, cysteine 4943, cysteine 4946, cysteine 4953, cysteine 4956, histidine 4960, histidine 4966, cysteine 4977, cysteine 4982, cysteine 4999, and histidine 5002 together coordinate Zn(2+). Residues asparagine 5175–leucine 5366 enclose the (+)RNA virus helicase ATP-binding domain. Glycine 5210–serine 5217 lines the ATP pocket. The (+)RNA virus helicase C-terminal domain maps to histidine 5367–lysine 5536. In terms of domain architecture, ExoN spans leucine 5598–valine 5812. Catalysis depends on residues aspartate 5616, glutamate 5618, and glutamate 5717. Zn(2+) contacts are provided by cysteine 5733, cysteine 5735, cysteine 5751, histidine 5754, histidine 5782, cysteine 5786, and histidine 5789. Catalysis depends on residues histidine 5793 and aspartate 5798. Position 5804 (cysteine 5804) interacts with Zn(2+). The N7-MTase domain maps to tyrosine 5821–lysine 6042. Aspartate 5856 to glycine 5862 contributes to the S-adenosyl-L-methionine binding site. The segment at cysteine 5933–threonine 5947 is gpppA-binding. The Zn(2+) site is built by cysteine 5971, cysteine 5988, cysteine 5999, and histidine 6002. Residues serine 6046 to arginine 6106 enclose the Nsp15 N-terminal oligomerization domain. The 118-residue stretch at lysine 6107–valine 6224 folds into the AV-Nsp11N/CoV-Nsp15M domain. The NendoU domain occupies lysine 6241–proline 6381. Catalysis depends on residues histidine 6271, histidine 6286, lysine 6327, lysine 6429, aspartate 6513, lysine 6553, and glutamate 6586. Residues serine 6385–valine 6681 enclose the Nidovirus-type SAM-dependent 2'-O-MTase domain.

The protein belongs to the coronaviruses polyprotein 1ab family. As to quaternary structure, 3CL-PRO exists as monomer and homodimer. Eight copies of nsp7 and eight copies of nsp8 assemble to form a heterohexadecamer. Nsp9 is a dimer. Nsp10 forms a dodecamer. Requires Mn(2+) as cofactor. In terms of processing, specific enzymatic cleavages in vivo by its own proteases yield mature proteins. 3CL-PRO is autocatalytically processed.

It is found in the host membrane. It localises to the host cytoplasm. The protein resides in the host perinuclear region. Its subcellular location is the host endoplasmic reticulum-Golgi intermediate compartment. It catalyses the reaction Thiol-dependent hydrolysis of ester, thioester, amide, peptide and isopeptide bonds formed by the C-terminal Gly of ubiquitin (a 76-residue protein attached to proteins as an intracellular targeting signal).. It carries out the reaction RNA(n) + a ribonucleoside 5'-triphosphate = RNA(n+1) + diphosphate. The enzyme catalyses ATP + H2O = ADP + phosphate + H(+). The catalysed reaction is a 5'-end diphospho-ribonucleoside in mRNA + GTP + H(+) = a 5'-end (5'-triphosphoguanosine)-ribonucleoside in mRNA + diphosphate. It catalyses the reaction a 5'-end (N(7)-methyl 5'-triphosphoguanosine)-ribonucleoside in mRNA + S-adenosyl-L-methionine = a 5'-end (N(7)-methyl 5'-triphosphoguanosine)-(2'-O-methyl-ribonucleoside) in mRNA + S-adenosyl-L-homocysteine + H(+). It carries out the reaction uridylyl-uridylyl-ribonucleotide-RNA = a 3'-end uridylyl-2',3'-cyclophospho-uridine-RNA + a 5'-end dephospho-ribonucleoside-RNA. In terms of biological role, the replicase polyprotein of coronaviruses is a multifunctional protein: it contains the activities necessary for the transcription of negative stranded RNA, leader RNA, subgenomic mRNAs and progeny virion RNA as well as proteinases responsible for the cleavage of the polyprotein into functional products. Functionally, non-structural protein 1 inhibits host translation. By suppressing host gene expression, nsp1 facilitates efficient viral gene expression in infected cells and evasion from host immune response. The papain-like proteinase 1 (PLP1) and papain-like proteinase 2 (PLP2) are responsible for the cleavages located at the N-terminus of the replicase polyprotein. In addition, PLP2 possesses a deubiquitinating/deISGylating activity and processes both 'Lys-48'- and 'Lys-63'-linked polyubiquitin chains from cellular substrates. PLP2 also antagonizes innate immune induction of type I interferon by blocking the nuclear translocation of host IRF-3. Its function is as follows. Responsible for the majority of cleavages as it cleaves the C-terminus of replicase polyprotein at 11 sites. Recognizes substrates containing the core sequence [ILMVF]-Q-|-[SAGC]. Inhibited by the substrate-analog Cbz-Val-Asn-Ser-Thr-Leu-Gln-CMK. In terms of biological role, the helicase which contains a zinc finger structure displays RNA and DNA duplex-unwinding activities with 5' to 3' polarity. ATPase activity is strongly stimulated by poly(U), poly(dT), poly(C), poly(dA), but not by poly(G). Functionally, the exoribonuclease acts on both ssRNA and dsRNA in a 3' to 5' direction. Nsp7-nsp8 hexadecamer may possibly confer processivity to the polymerase, maybe by binding to dsRNA or by producing primers utilized by the latter. Its function is as follows. Forms a primer, NSP9-pU, which is utilized by the polymerase for the initiation of RNA chains. Interacts with ribosome signal recognition particle RNA (SRP). Together with NSP8, suppress protein integration into the cell membrane, thereby disrupting host immune defenses. In terms of biological role, RNA-directed RNA polymerase that catalyzes the transcription of viral genomic and subgenomic RNAs. Acts in complex with nsp7 and nsp8 to transcribe both the minus and positive strands of genomic RNA. The kinase-like NiRAN domain of NSP12 attaches one or more nucleotides to the amino terminus of NSP9, forming a covalent RNA-protein intermediate that serves as transcription/replication primer. Subgenomic RNAs (sgRNAs) are formed by discontinuous transcription: The polymerase has the ability to pause at transcription-regulating sequences (TRS) and jump to the leader TRS, resulting in a major deletion. This creates a series of subgenomic RNAs that are replicated, transcribed and translated. In addition, Nsp12 is a subunit of the viral RNA capping enzyme that catalyzes the RNA guanylyltransferase reaction for genomic and sub-genomic RNAs. Subsequently, the NiRAN domain transfers RNA to GDP, and forms the core cap structure GpppA-RNA. Functionally, plays a role in viral transcription/replication and prevents the simultaneous activation of host cell dsRNA sensors, such as MDA5/IFIH1, OAS, and PKR. Acts by degrading the 5'-polyuridines generated during replication of the poly(A) region of viral genomic and subgenomic RNAs. Catalyzes a two-step reaction in which a 2'3'-cyclic phosphate (2'3'-cP) is first generated by 2'-O transesterification, which is then hydrolyzed to a 3'-phosphate (3'-P). If not degraded, poly(U) RNA would hybridize with poly(A) RNA tails and activate host dsRNA sensors. In Sus scrofa (Pig), this protein is Replicase polyprotein 1ab (rep).